The chain runs to 167 residues: Putative C-type lectin protein FPV008/FPV253 (167 aa).

The 104-residue stretch at 49 to 152 (CPDEWIGYNS…SCIFHERTIC (104 aa)) folds into the C-type lectin domain. Cystine bridges form between cysteine 77–cysteine 152 and cysteine 131–cysteine 144.

The chain is Putative C-type lectin protein FPV008/FPV253 from Vertebrata (FPV).